A 638-amino-acid polypeptide reads, in one-letter code: Probable inactive receptor kinase At4g23740 (638 aa).

The N-terminal stretch at 1 to 24 (MEALRIYLWSLCLSLCLIIYGANS) is a signal peptide. LRR repeat units lie at residues 94–117 (ALRV…VELK), 118–139 (DLAF…DFSV), 142–165 (NLTS…SRLK), 166–188 (RIQS…SVLS), and 189–198 (SLQHIDLSNN). The helical transmembrane segment at 257-277 (VFLLIVIAVSIVVITALAFVL) threads the bilayer. The region spanning 337–608 (RASAEVLGKG…SDLVRLIENV (272 aa)) is the Protein kinase domain. Ser339 carries the post-translational modification Phosphoserine. 343-351 (LGKGTFGTT) contacts ATP. Thr360 is subject to Phosphothreonine. Lys365 contributes to the ATP binding site. Phosphoserine is present on residues Ser416 and Ser419. Thr436 and Thr509 each carry phosphothreonine. Residue Ser513 is modified to Phosphoserine. The segment at 612-638 (RTSIEPEPELKPKSENGASETSTPSEI) is disordered. Basic and acidic residues predominate over residues 613–625 (TSIEPEPELKPKS). Polar residues predominate over residues 627–638 (NGASETSTPSEI).

This sequence belongs to the protein kinase superfamily.

The protein localises to the membrane. The chain is Probable inactive receptor kinase At4g23740 from Arabidopsis thaliana (Mouse-ear cress).